The primary structure comprises 932 residues: Isoleucine--tRNA ligase (932 aa).

The 'HIGH' region motif lies at 57–67 (PYANGDIHIGT). Glu-559 contacts L-isoleucyl-5'-AMP. The short motif at 600-604 (KMSKS) is the 'KMSKS' region element. Lys-603 contacts ATP. Positions 899, 902, 919, and 922 each coordinate Zn(2+).

This sequence belongs to the class-I aminoacyl-tRNA synthetase family. IleS type 1 subfamily. In terms of assembly, monomer. The cofactor is Zn(2+).

The protein localises to the cytoplasm. It carries out the reaction tRNA(Ile) + L-isoleucine + ATP = L-isoleucyl-tRNA(Ile) + AMP + diphosphate. Catalyzes the attachment of isoleucine to tRNA(Ile). As IleRS can inadvertently accommodate and process structurally similar amino acids such as valine, to avoid such errors it has two additional distinct tRNA(Ile)-dependent editing activities. One activity is designated as 'pretransfer' editing and involves the hydrolysis of activated Val-AMP. The other activity is designated 'posttransfer' editing and involves deacylation of mischarged Val-tRNA(Ile). The chain is Isoleucine--tRNA ligase from Thermoanaerobacter pseudethanolicus (strain ATCC 33223 / 39E) (Clostridium thermohydrosulfuricum).